The following is a 434-amino-acid chain: UPF0053 protein YrkA (434 aa).

Positions 1-201 (MTTINLIIFT…YKSGEINQNE (201 aa)) constitute a CNNM transmembrane domain. The next 3 membrane-spanning stretches (helical) occupy residues 7–27 (IIFTLLIVLTAFFVATEFAIV), 64–84 (LGITVTALGIGWVGESTFEVI), and 101–121 (VLILVIAFVMATFLHVVVGEL). CBS domains lie at 220-282 (MIPR…KIKE) and 289-346 (HINP…IRDE).

The protein belongs to the UPF0053 family.

It is found in the cell membrane. The protein is UPF0053 protein YrkA (yrkA) of Bacillus subtilis (strain 168).